A 327-amino-acid chain; its full sequence is Glycolipid sulfotransferase BCG_1434 (327 aa).

Position 40-45 (40-45) interacts with 3'-phosphoadenylyl sulfate; the sequence is KSGLTW. Histidine 97 acts as the Proton acceptor in catalysis. 116–124 contributes to the 3'-phosphoadenylyl sulfate binding site; the sequence is RDPRDAAVS.

Belongs to the sulfotransferase 1 family.

Functionally, involved in the synthesis of cell wall sulfolipids. This is Glycolipid sulfotransferase BCG_1434 from Mycobacterium bovis (strain BCG / Pasteur 1173P2).